Here is a 368-residue protein sequence, read N- to C-terminus: Heme A synthase (368 aa).

A run of 5 helical transmembrane segments spans residues 14-34, 104-124, 129-149, 161-181, and 200-220; these read AVRI…LVGG, VIGI…AIGP, ALWI…WMVA, VRLA…VWTL, and ALAL…VAGL. H264 contacts heme. A run of 3 helical transmembrane segments spans residues 266–283, 296–316, and 318–338; these read MLAY…IDAL, FLAL…AAPI, and LALV…LQAE. H322 is a binding site for heme.

This sequence belongs to the COX15/CtaA family. Type 2 subfamily. Interacts with CtaB. Requires heme b as cofactor.

It is found in the cell membrane. The catalysed reaction is Fe(II)-heme o + 2 A + H2O = Fe(II)-heme a + 2 AH2. The protein operates within porphyrin-containing compound metabolism; heme A biosynthesis; heme A from heme O: step 1/1. Catalyzes the conversion of heme O to heme A by two successive hydroxylations of the methyl group at C8. The first hydroxylation forms heme I, the second hydroxylation results in an unstable dihydroxymethyl group, which spontaneously dehydrates, resulting in the formyl group of heme A. This is Heme A synthase from Rhodopseudomonas palustris (strain ATCC BAA-98 / CGA009).